Here is a 180-residue protein sequence, read N- to C-terminus: CASP-like protein 2D1 (180 aa).

The Cytoplasmic portion of the chain corresponds to 1 to 7 (MAASGLK). A helical transmembrane segment spans residues 8–28 (VPEMALRVCVVPLALASLWEM). At 29–48 (ATNAQADDTYGEVKFSDLSG) the chain is on the extracellular side. Residues 49-69 (FSYLVGVNAVTAAYALVSILL) traverse the membrane as a helical segment. Topologically, residues 70-79 (SSLKPLARYD) are cytoplasmic. A helical membrane pass occupies residues 80–100 (WVILVMDQASAYLLVTSASAA). At 101–129 (AELLQLARRGDREVSWGEVCSYFGRFCGK) the chain is on the extracellular side. The helical transmembrane segment at 130 to 150 (ATVSLALHAAALACFVALALV) threads the bilayer. Over 151 to 180 (SAFRVLSTTGSSCHPPKHAQAQEHEQGRYN) the chain is Cytoplasmic. Residues 161–180 (SSCHPPKHAQAQEHEQGRYN) are disordered. Residues 170–180 (QAQEHEQGRYN) show a composition bias toward basic and acidic residues.

It belongs to the Casparian strip membrane proteins (CASP) family. As to quaternary structure, homodimer and heterodimers.

Its subcellular location is the cell membrane. The chain is CASP-like protein 2D1 from Sorghum bicolor (Sorghum).